Here is a 954-residue protein sequence, read N- to C-terminus: Leucine--tRNA ligase (954 aa).

Residues 40-51 (PYPSGAGLHVGH) carry the 'HIGH' region motif. The 'KMSKS' region motif lies at 729-733 (KMSKS). Lys-732 contributes to the ATP binding site.

Belongs to the class-I aminoacyl-tRNA synthetase family.

The protein localises to the cytoplasm. The catalysed reaction is tRNA(Leu) + L-leucine + ATP = L-leucyl-tRNA(Leu) + AMP + diphosphate. The protein is Leucine--tRNA ligase of Flavobacterium johnsoniae (strain ATCC 17061 / DSM 2064 / JCM 8514 / BCRC 14874 / CCUG 350202 / NBRC 14942 / NCIMB 11054 / UW101) (Cytophaga johnsonae).